A 100-amino-acid chain; its full sequence is MKISEEEVRHVAALSKLSFSESETTEFATTLSKIVDMVELLNEVDTTGVAITTTMADKKNIMRADIAEAGVDRKLLFQNVPEKENHFIKVPAILDDGGDA.

It belongs to the GatC family. Heterotrimer of A, B and C subunits.

The enzyme catalyses L-glutamyl-tRNA(Gln) + L-glutamine + ATP + H2O = L-glutaminyl-tRNA(Gln) + L-glutamate + ADP + phosphate + H(+). It carries out the reaction L-aspartyl-tRNA(Asn) + L-glutamine + ATP + H2O = L-asparaginyl-tRNA(Asn) + L-glutamate + ADP + phosphate + 2 H(+). Its function is as follows. Allows the formation of correctly charged Asn-tRNA(Asn) or Gln-tRNA(Gln) through the transamidation of misacylated Asp-tRNA(Asn) or Glu-tRNA(Gln) in organisms which lack either or both of asparaginyl-tRNA or glutaminyl-tRNA synthetases. The reaction takes place in the presence of glutamine and ATP through an activated phospho-Asp-tRNA(Asn) or phospho-Glu-tRNA(Gln). The chain is Aspartyl/glutamyl-tRNA(Asn/Gln) amidotransferase subunit C from Streptococcus equi subsp. equi (strain 4047).